The following is a 476-amino-acid chain: Siroheme synthase (476 aa).

Positions 1-207 (MTANVLFPLF…QRHAEAEAVL (207 aa)) are precorrin-2 dehydrogenase /sirohydrochlorin ferrochelatase. NAD(+) contacts are provided by residues 25-26 (KV) and 46-47 (PS). Position 132 is a phosphoserine (serine 132). Residues 220-476 (GSVTLVGAGA…SAPCPPALIL (257 aa)) are uroporphyrinogen-III C-methyltransferase. Aspartate 252 acts as the Proton acceptor in catalysis. The Proton donor role is filled by lysine 274. S-adenosyl-L-methionine-binding positions include 305-307 (GGD), valine 310, 335-336 (TA), methionine 387, and glycine 416.

It in the N-terminal section; belongs to the precorrin-2 dehydrogenase / sirohydrochlorin ferrochelatase family. This sequence in the C-terminal section; belongs to the precorrin methyltransferase family.

It catalyses the reaction uroporphyrinogen III + 2 S-adenosyl-L-methionine = precorrin-2 + 2 S-adenosyl-L-homocysteine + H(+). It carries out the reaction precorrin-2 + NAD(+) = sirohydrochlorin + NADH + 2 H(+). The catalysed reaction is siroheme + 2 H(+) = sirohydrochlorin + Fe(2+). Its pathway is cofactor biosynthesis; adenosylcobalamin biosynthesis; precorrin-2 from uroporphyrinogen III: step 1/1. The protein operates within cofactor biosynthesis; adenosylcobalamin biosynthesis; sirohydrochlorin from precorrin-2: step 1/1. It functions in the pathway porphyrin-containing compound metabolism; siroheme biosynthesis; precorrin-2 from uroporphyrinogen III: step 1/1. It participates in porphyrin-containing compound metabolism; siroheme biosynthesis; siroheme from sirohydrochlorin: step 1/1. Its pathway is porphyrin-containing compound metabolism; siroheme biosynthesis; sirohydrochlorin from precorrin-2: step 1/1. Its function is as follows. Multifunctional enzyme that catalyzes the SAM-dependent methylations of uroporphyrinogen III at position C-2 and C-7 to form precorrin-2 via precorrin-1. Then it catalyzes the NAD-dependent ring dehydrogenation of precorrin-2 to yield sirohydrochlorin. Finally, it catalyzes the ferrochelation of sirohydrochlorin to yield siroheme. In Xylella fastidiosa (strain 9a5c), this protein is Siroheme synthase.